A 587-amino-acid polypeptide reads, in one-letter code: Aspartate--tRNA ligase (587 aa).

Glu174 provides a ligand contact to L-aspartate. The tract at residues 198–201 is aspartate; that stretch reads QITK. Arg220 is a binding site for L-aspartate. ATP contacts are provided by residues 220-222 and Gln229; that span reads RDE. Residue His443 participates in L-aspartate binding. Glu477 contacts ATP. Arg484 contacts L-aspartate. 529–532 provides a ligand contact to ATP; sequence GLDR.

It belongs to the class-II aminoacyl-tRNA synthetase family. Type 1 subfamily. As to quaternary structure, homodimer.

It localises to the cytoplasm. The enzyme catalyses tRNA(Asp) + L-aspartate + ATP = L-aspartyl-tRNA(Asp) + AMP + diphosphate. Its function is as follows. Catalyzes the attachment of L-aspartate to tRNA(Asp) in a two-step reaction: L-aspartate is first activated by ATP to form Asp-AMP and then transferred to the acceptor end of tRNA(Asp). The sequence is that of Aspartate--tRNA ligase from Streptococcus pneumoniae serotype 2 (strain D39 / NCTC 7466).